We begin with the raw amino-acid sequence, 85 residues long: UPF0297 protein lhv_0439 (85 aa).

The protein belongs to the UPF0297 family.

This Lactobacillus helveticus (strain DPC 4571) protein is UPF0297 protein lhv_0439.